A 185-amino-acid chain; its full sequence is V-type proton ATPase subunit E (185 aa).

Belongs to the V-ATPase E subunit family.

In terms of biological role, produces ATP from ADP in the presence of a proton gradient across the membrane. In Deinococcus deserti (strain DSM 17065 / CIP 109153 / LMG 22923 / VCD115), this protein is V-type proton ATPase subunit E.